A 211-amino-acid chain; its full sequence is Small ribosomal subunit protein uS3 (211 aa).

In terms of domain architecture, KH type-2 spans 16 to 85 (IDEYFKTKLV…NPQIEVKQVE (70 aa)).

This sequence belongs to the universal ribosomal protein uS3 family. In terms of assembly, part of the 30S ribosomal subunit.

Its function is as follows. Binds the lower part of the 30S subunit head. This is Small ribosomal subunit protein uS3 from Methanococcus maripaludis (strain C5 / ATCC BAA-1333).